Reading from the N-terminus, the 106-residue chain is Integration host factor subunit beta (106 aa).

The disordered stretch occupies residues 57 to 106 (PARAGRNPRTGEHVPVEQKSVPFFKTGKEMRERLNRDGLDGATPPSPPAA). Positions 82-95 (TGKEMRERLNRDGL) are enriched in basic and acidic residues.

This sequence belongs to the bacterial histone-like protein family. Heterodimer of an alpha and a beta chain.

This protein is one of the two subunits of integration host factor, a specific DNA-binding protein that functions in genetic recombination as well as in transcriptional and translational control. The sequence is that of Integration host factor subunit beta from Afipia carboxidovorans (strain ATCC 49405 / DSM 1227 / KCTC 32145 / OM5) (Oligotropha carboxidovorans).